The following is a 409-amino-acid chain: 3-dehydro-bile acid delta(4,6)-reductase (409 aa).

Positions 12, 33, 131, 378, 390, and 391 each coordinate FAD.

Belongs to the BaiN/RdsA family. BaiN subfamily. Requires FAD as cofactor.

It carries out the reaction 3-oxocholan-24-oyl-CoA + NAD(+) = 3-oxochol-4-en-24-oyl-CoA + NADH + H(+). It catalyses the reaction 3-oxochol-4-en-24-oyl-CoA + NAD(+) = 3-oxochol-4,6-dien-24-oyl-CoA + NADH + H(+). The catalysed reaction is 12alpha-hydroxy-3-oxocholan-24-oyl-CoA + NAD(+) = 12alpha-hydroxy-3-oxochol-4-en-24-oyl-CoA + NADH + H(+). The enzyme catalyses 12alpha-hydroxy-3-oxochol-4-en-24-oyl-CoA + NAD(+) = 12alpha-hydroxy-3-oxochola-4,6-dien-24-oyl-CoA + NADH + H(+). Its pathway is lipid metabolism; bile acid degradation. Involved in the secondary bile acid metabolism. Catalyzes two subsequent reductions of the double bonds within the bile acid A/B rings of 3-oxochol-4,6-dien-24-oyl-CoA and 12alpha-hydroxy-3-oxochol-4,6-dien-24-oyl-CoA to yield 3-oxocholan-24-oyl-CoA and 12alpha-hydroxy-3-oxocholan-24-oyl-CoA, respectively. This chain is 3-dehydro-bile acid delta(4,6)-reductase, found in Clostridium scindens (strain ATCC 35704 / DSM 5676 / VPI 13733 / 19).